A 178-amino-acid chain; its full sequence is Fluoride-specific ion channel FluC 2 (178 aa).

4 consecutive transmembrane segments (helical) span residues 25-45, 63-83, 97-117, and 129-149; these read PDIH…GTAI, FVAN…LAGA, GLGM…LEGF, and IAYL…GVWA. Positions 104 and 107 each coordinate Na(+).

Belongs to the fluoride channel Fluc/FEX (TC 1.A.43) family.

It localises to the cell membrane. It carries out the reaction fluoride(in) = fluoride(out). With respect to regulation, na(+) is not transported, but it plays an essential structural role and its presence is essential for fluoride channel function. Functionally, fluoride-specific ion channel. Important for reducing fluoride concentration in the cell, thus reducing its toxicity. This Bifidobacterium longum (strain NCC 2705) protein is Fluoride-specific ion channel FluC 2.